Here is an 89-residue protein sequence, read N- to C-terminus: Large ribosomal subunit protein bL31B (89 aa).

This sequence belongs to the bacterial ribosomal protein bL31 family. Type B subfamily. In terms of assembly, part of the 50S ribosomal subunit.

The protein is Large ribosomal subunit protein bL31B of Aeromonas hydrophila subsp. hydrophila (strain ATCC 7966 / DSM 30187 / BCRC 13018 / CCUG 14551 / JCM 1027 / KCTC 2358 / NCIMB 9240 / NCTC 8049).